The chain runs to 37 residues: M-oxotoxin-Ot2d (37 aa).

Expressed by the venom gland.

Its subcellular location is the secreted. Disrupts biological membranes, particularly those rich in phosphocholine. Has antimicrobial activity against Gram-negative bacterium E.coli, Gram-positive bacteria B.subtilis and S.aureus, and hemolytic activity against sheep, pig and guinea pig red blood cells. Has insecticidal activity against S.frugiperda ovarian cells by opening non-selective ion channels. Enhances the insecticidal activity of spider venom neurotoxic peptides. The protein is M-oxotoxin-Ot2d of Oxyopes takobius (Lynx spider).